Reading from the N-terminus, the 68-residue chain is ATP synthase F(0) complex subunit 8 (68 aa).

A helical transmembrane segment spans residues 8-24 (VWPTTITPMLLTLFLIT). The residue at position 54 (K54) is an N6-acetyllysine; alternate. An N6-succinyllysine; alternate modification is found at K54. Position 57 is an N6-acetyllysine (K57).

The protein belongs to the ATPase protein 8 family. Component of the ATP synthase complex composed at least of ATP5F1A/subunit alpha, ATP5F1B/subunit beta, ATP5MC1/subunit c (homooctomer), MT-ATP6/subunit a, MT-ATP8/subunit 8, ATP5ME/subunit e, ATP5MF/subunit f, ATP5MG/subunit g, ATP5MK/subunit k, ATP5MJ/subunit j, ATP5F1C/subunit gamma, ATP5F1D/subunit delta, ATP5F1E/subunit epsilon, ATP5PF/subunit F6, ATP5PB/subunit b, ATP5PD/subunit d, ATP5PO/subunit OSCP. ATP synthase complex consists of a soluble F(1) head domain (subunits alpha(3) and beta(3)) - the catalytic core - and a membrane F(0) domain - the membrane proton channel (subunits c, a, 8, e, f, g, k and j). These two domains are linked by a central stalk (subunits gamma, delta, and epsilon) rotating inside the F1 region and a stationary peripheral stalk (subunits F6, b, d, and OSCP). Interacts with PRICKLE3.

It localises to the mitochondrion membrane. Subunit 8, of the mitochondrial membrane ATP synthase complex (F(1)F(0) ATP synthase or Complex V) that produces ATP from ADP in the presence of a proton gradient across the membrane which is generated by electron transport complexes of the respiratory chain. ATP synthase complex consist of a soluble F(1) head domain - the catalytic core - and a membrane F(1) domain - the membrane proton channel. These two domains are linked by a central stalk rotating inside the F(1) region and a stationary peripheral stalk. During catalysis, ATP synthesis in the catalytic domain of F(1) is coupled via a rotary mechanism of the central stalk subunits to proton translocation. In vivo, can only synthesize ATP although its ATP hydrolase activity can be activated artificially in vitro. Part of the complex F(0) domain. The sequence is that of ATP synthase F(0) complex subunit 8 from Pan paniscus (Pygmy chimpanzee).